The sequence spans 115 residues: UPF0125 protein VP0646 (115 aa).

The segment at 92 to 115 is disordered; the sequence is RAEQAKAAGNADPVTGGKPNALRK.

Belongs to the UPF0125 (RnfH) family.

This Vibrio parahaemolyticus serotype O3:K6 (strain RIMD 2210633) protein is UPF0125 protein VP0646.